A 351-amino-acid polypeptide reads, in one-letter code: Peptide chain release factor 1 (351 aa).

Residue Gln229 is modified to N5-methylglutamine.

It belongs to the prokaryotic/mitochondrial release factor family. Post-translationally, methylated by PrmC. Methylation increases the termination efficiency of RF1.

Its subcellular location is the cytoplasm. In terms of biological role, peptide chain release factor 1 directs the termination of translation in response to the peptide chain termination codons UAG and UAA. In Dinoroseobacter shibae (strain DSM 16493 / NCIMB 14021 / DFL 12), this protein is Peptide chain release factor 1.